Reading from the N-terminus, the 160-residue chain is Oocyte-secreted protein 4B (160 aa).

The first 13 residues, 1–13 (MKTSVLLAITAMC), serve as a signal peptide directing secretion.

Belongs to the PLAC1 family.

Its subcellular location is the secreted. The sequence is that of Oocyte-secreted protein 4B from Homo sapiens (Human).